The following is a 447-amino-acid chain: Argininosuccinate synthase (447 aa).

ATP-binding positions include 17 to 25 (AFSGGLDTS) and Ala43. Position 99 (Tyr99) interacts with L-citrulline. The ATP site is built by Gly129 and Thr131. L-aspartate is bound by residues Thr131, Asn135, and Asp136. Asn135 contributes to the L-citrulline binding site. Asp136 is a binding site for ATP. 2 residues coordinate L-citrulline: Arg139 and Ser192. Residue Asp194 participates in ATP binding. Thr201, Glu203, and Glu280 together coordinate L-citrulline.

It belongs to the argininosuccinate synthase family. Type 2 subfamily. Homotetramer.

Its subcellular location is the cytoplasm. The enzyme catalyses L-citrulline + L-aspartate + ATP = 2-(N(omega)-L-arginino)succinate + AMP + diphosphate + H(+). Its pathway is amino-acid biosynthesis; L-arginine biosynthesis; L-arginine from L-ornithine and carbamoyl phosphate: step 2/3. This Salmonella heidelberg (strain SL476) protein is Argininosuccinate synthase.